A 670-amino-acid chain; its full sequence is Serine/threonine-rich protein adg2 (670 aa).

Residues 1–19 (MRRLTISGLLISLAKLCAG) form the signal peptide. Asn-77, Asn-159, Asn-204, Asn-224, Asn-274, Asn-297, Asn-327, Asn-351, Asn-370, Asn-381, Asn-405, Asn-424, Asn-435, Asn-459, Asn-478, Asn-489, and Asn-513 each carry an N-linked (GlcNAc...) asparagine glycan. The segment at 526–651 (GSVSSFSSSP…MSLPPSAGSS (126 aa)) is disordered.

The protein localises to the secreted. The protein resides in the endoplasmic reticulum. This chain is Serine/threonine-rich protein adg2 (adg2), found in Schizosaccharomyces pombe (strain 972 / ATCC 24843) (Fission yeast).